A 141-amino-acid chain; its full sequence is Calcium-binding protein SPEC 2D (141 aa).

EF-hand domains lie at 10 to 42 (DQIK…MKSV), 43 to 72 (GHVL…AMIL), 73 to 107 (DKKC…FDRQ), and 108 to 141 (ITED…MNFC). Ca(2+) contacts are provided by D23, N25, D27, and N29. Positions 84, 86, 90, 95, 121, 125, 127, and 132 each coordinate Ca(2+).

Found in cell lineages giving rise to the aboral ectoderm, a squamous epithelium covering the surface of the late stage embryo and larva.

Functionally, calcium-binding protein involved in larval development and metamorphosis. Likely to function as calcium buffers mediating the transport of calcium from the sea water to the blastocoel where calcium is required for skeleton formation. This Strongylocentrotus purpuratus (Purple sea urchin) protein is Calcium-binding protein SPEC 2D (SPEC2D).